Consider the following 299-residue polypeptide: MSSSLRQWFARVLVLTQLINGALCWGKEGHYTVCKIAESYFEEETVAAVKKLLPKSADGDLASVCSWPDEIKHHWQWRWTSPLHYVDTPDYRCNYEYCRDCHDTHKNQDRCVTGAIFNYTMQLMSASENSDTIVHYNLTEALMFLSHFIGDIHQPLHVGFLGDEGGNTITVRWYRRKTNLHHVWDNMIIESALKTYYNKSLPLMIEALQANLTNDWSNDVPLWESCQLNQTACPNPYASESINLACKYAYRNATPGTTLGDDYFLSRLPIVEKRLAQGGIRLAATLNRIFSSKPKHAGS.

The signal sequence occupies residues 1-24 (MSSSLRQWFARVLVLTQLINGALC). A divalent metal cation-binding residues include Trp-25 and His-30. Residue 25-30 (WGKEGH) coordinates substrate. A disulfide bridge links Cys-34 with Cys-65. A divalent metal cation contacts are provided by Asp-69 and His-84. Substrate is bound by residues 69–75 (DEIKHHW), 84–87 (HYVD), and 94–99 (NYEYCR). Intrachain disulfides connect Cys-93–Cys-246, Cys-101–Cys-111, and Cys-226–Cys-233. Residues Asn-118 and Tyr-136 each coordinate substrate. Residue Asn-118 is glycosylated (N-linked (GlcNAc...) asparagine). The N-linked (GlcNAc...) asparagine glycan is linked to Asn-137. 5 residues coordinate a divalent metal cation: His-147, Asp-151, His-157, His-181, and Asp-185. Residues 147-196 (HFIGDIHQPLHVGFLGDEGGNTITVRWYRRKTNLHHVWDNMIIESALKTY) are substrate binding. 3 N-linked (GlcNAc...) asparagine glycosylation sites follow: Asn-198, Asn-211, and Asn-229. Positions 284–299 (ATLNRIFSSKPKHAGS) are cleaved as a propeptide — removed in mature form.

Belongs to the nuclease type I family. As to quaternary structure, monomer. The cofactor is Mn(2+). Ca(2+) is required as a cofactor.

It carries out the reaction Endonucleolytic cleavage to 5'-phosphomononucleotide and 5'-phosphooligonucleotide end-products.. Its function is as follows. Endonuclease that can use single-stranded RNA and DNA as substrates. In contradiction with PubMed:23620482, cannot hydrolyze single-stranded DNA and does not cleave mismatches. This Arabidopsis thaliana (Mouse-ear cress) protein is Endonuclease 4.